A 502-amino-acid polypeptide reads, in one-letter code: Probable cytosol aminopeptidase (502 aa).

Positions 269 and 274 each coordinate Mn(2+). Lysine 281 is an active-site residue. Residues aspartate 292, aspartate 351, and glutamate 353 each coordinate Mn(2+). Residue arginine 355 is part of the active site.

This sequence belongs to the peptidase M17 family. The cofactor is Mn(2+).

It is found in the cytoplasm. It catalyses the reaction Release of an N-terminal amino acid, Xaa-|-Yaa-, in which Xaa is preferably Leu, but may be other amino acids including Pro although not Arg or Lys, and Yaa may be Pro. Amino acid amides and methyl esters are also readily hydrolyzed, but rates on arylamides are exceedingly low.. It carries out the reaction Release of an N-terminal amino acid, preferentially leucine, but not glutamic or aspartic acids.. In terms of biological role, presumably involved in the processing and regular turnover of intracellular proteins. Catalyzes the removal of unsubstituted N-terminal amino acids from various peptides. The sequence is that of Probable cytosol aminopeptidase from Aliivibrio fischeri (strain MJ11) (Vibrio fischeri).